Consider the following 197-residue polypeptide: Large ribosomal subunit protein bL25 (197 aa).

Belongs to the bacterial ribosomal protein bL25 family. CTC subfamily. Part of the 50S ribosomal subunit; part of the 5S rRNA/L5/L18/L25 subcomplex. Contacts the 5S rRNA. Binds to the 5S rRNA independently of L5 and L18.

In terms of biological role, this is one of the proteins that binds to the 5S RNA in the ribosome where it forms part of the central protuberance. This is Large ribosomal subunit protein bL25 from Caulobacter vibrioides (strain ATCC 19089 / CIP 103742 / CB 15) (Caulobacter crescentus).